A 332-amino-acid chain; its full sequence is MILAFSGCVDQSASDSTSEDATPKVLKIFHAGSLAVPFGEYETLYENEYTNVDVQRESAGSVACVRKITELNKTAEILASADYTLIPSMMMPDYADWYVMVAKNEIVIAYTENSQYYDEITSDNWYEIFQRDGVKYGFSSPNDDPCGYRSQMVVQLAEEAYGDSTIYDNLMLGNTNFEVNENADGTYCIVSPESIDVNEAKVFMRSKEVDLLGPLETGAYDYLFIYKSVANQHGLSYIELPEDINLGDYQNADEYAKASIFLTGQNKTIVAKPIVYGMTVPSNAEDYEEGVNFVKTVLEHPEVFENAGQPVISPAIAVGDVPEEISDLVVMG.

The protein belongs to the bacterial solute-binding protein 1 family. WtpA subfamily.

This is an uncharacterized protein from Methanococcus maripaludis (strain DSM 14266 / JCM 13030 / NBRC 101832 / S2 / LL).